The following is a 459-amino-acid chain: tRNA modification GTPase MnmE (459 aa).

The (6S)-5-formyl-5,6,7,8-tetrahydrofolate site is built by Arg-21, Glu-84, and Arg-123. Residues 219 to 378 form the TrmE-type G domain; the sequence is GVTVALAGAV…LLVLLYNFVL (160 aa). Residues 229–234, 248–254, and 273–276 contribute to the GTP site; these read NAGKSS, TEHPGTT, and DTAG. Mg(2+) is bound by residues Ser-233 and Thr-254. Lys-459 serves as a coordination point for (6S)-5-formyl-5,6,7,8-tetrahydrofolate.

This sequence belongs to the TRAFAC class TrmE-Era-EngA-EngB-Septin-like GTPase superfamily. TrmE GTPase family. As to quaternary structure, homodimer. Heterotetramer of two MnmE and two MnmG subunits. The cofactor is K(+).

It localises to the cytoplasm. Its function is as follows. Exhibits a very high intrinsic GTPase hydrolysis rate. Involved in the addition of a carboxymethylaminomethyl (cmnm) group at the wobble position (U34) of certain tRNAs, forming tRNA-cmnm(5)s(2)U34. The protein is tRNA modification GTPase MnmE of Lawsonia intracellularis (strain PHE/MN1-00).